The chain runs to 194 residues: MDISRLISLFSKLPGLGPASSRRIVLHLLRHRHDVMTPLANGIRELEESTKECEICFNLDVTSPCSICTDSRRDKSLLCIVEELGDLWAFEKGRIYQGMYHVLGGVLSALSGVGPEDLNMSSIPERVRLHGVKEVIVATGSDMDGQVTCHYIAQSIKSTGVKVTRLACGIPLGGEIDYLDEGTLRAALSSRYII.

The C4-type zinc-finger motif lies at 53 to 68 (CEICFNLDVTSPCSIC). Positions 76–171 (SLLCIVEELG…KVTRLACGIP (96 aa)) constitute a Toprim domain.

It belongs to the RecR family.

In terms of biological role, may play a role in DNA repair. It seems to be involved in an RecBC-independent recombinational process of DNA repair. It may act with RecF and RecO. The sequence is that of Recombination protein RecR from Anaplasma phagocytophilum (strain HZ).